The chain runs to 323 residues: Mycothiol acetyltransferase (323 aa).

2 N-acetyltransferase domains span residues 21-176 (ELLR…VSLR) and 173-323 (VSLR…LTKN). Residue Glu44 participates in 1D-myo-inositol 2-(L-cysteinylamino)-2-deoxy-alpha-D-glucopyranoside binding. Residue 98–100 (LAV) coordinates acetyl-CoA. The 1D-myo-inositol 2-(L-cysteinylamino)-2-deoxy-alpha-D-glucopyranoside site is built by Glu200, Lys240, and Glu253. Residues 257 to 259 (VGV) and 264 to 270 (QGLGLGK) contribute to the acetyl-CoA site. Position 291 (Tyr291) interacts with 1D-myo-inositol 2-(L-cysteinylamino)-2-deoxy-alpha-D-glucopyranoside.

The protein belongs to the acetyltransferase family. MshD subfamily. Monomer.

The enzyme catalyses 1D-myo-inositol 2-(L-cysteinylamino)-2-deoxy-alpha-D-glucopyranoside + acetyl-CoA = mycothiol + CoA + H(+). Catalyzes the transfer of acetyl from acetyl-CoA to desacetylmycothiol (Cys-GlcN-Ins) to form mycothiol. This chain is Mycothiol acetyltransferase, found in Paenarthrobacter aurescens (strain TC1).